The primary structure comprises 168 residues: Cytochrome c-type biogenesis protein CcmE (168 aa).

The Cytoplasmic segment spans residues Met1–Arg23. Residues Trp24–Asn44 traverse the membrane as a helical; Signal-anchor for type II membrane protein segment. The Extracellular segment spans residues Ala45–Pro168. Positions 137 and 141 each coordinate heme. The tract at residues Asp145–Pro168 is disordered.

Belongs to the CcmE/CycJ family.

The protein resides in the cell membrane. Functionally, heme chaperone required for the biogenesis of c-type cytochromes. Transiently binds heme delivered by CcmC and transfers the heme to apo-cytochromes in a process facilitated by CcmF and CcmH. The chain is Cytochrome c-type biogenesis protein CcmE from Deinococcus radiodurans (strain ATCC 13939 / DSM 20539 / JCM 16871 / CCUG 27074 / LMG 4051 / NBRC 15346 / NCIMB 9279 / VKM B-1422 / R1).